We begin with the raw amino-acid sequence, 255 residues long: Triosephosphate isomerase (255 aa).

9–11 (NWK) contacts substrate. Residue H95 is the Electrophile of the active site. E167 (proton acceptor) is an active-site residue. Residues G173, S212, and 233 to 234 (GG) each bind substrate.

It belongs to the triosephosphate isomerase family. Homodimer.

Its subcellular location is the cytoplasm. The catalysed reaction is D-glyceraldehyde 3-phosphate = dihydroxyacetone phosphate. It functions in the pathway carbohydrate biosynthesis; gluconeogenesis. Its pathway is carbohydrate degradation; glycolysis; D-glyceraldehyde 3-phosphate from glycerone phosphate: step 1/1. Its function is as follows. Involved in the gluconeogenesis. Catalyzes stereospecifically the conversion of dihydroxyacetone phosphate (DHAP) to D-glyceraldehyde-3-phosphate (G3P). The sequence is that of Triosephosphate isomerase from Salmonella dublin (strain CT_02021853).